The chain runs to 268 residues: Shikimate dehydrogenase (NADP(+)) (268 aa).

Residue Thr62 participates in shikimate binding. The Proton acceptor role is filled by Lys66. Glu78 lines the NADP(+) pocket. Shikimate-binding residues include Asn87 and Asp102. NADP(+) is bound by residues 126-130 (GSGGI) and Leu207. A shikimate-binding site is contributed by Tyr209. An NADP(+)-binding site is contributed by Gly230.

The protein belongs to the shikimate dehydrogenase family. In terms of assembly, homodimer.

It carries out the reaction shikimate + NADP(+) = 3-dehydroshikimate + NADPH + H(+). The protein operates within metabolic intermediate biosynthesis; chorismate biosynthesis; chorismate from D-erythrose 4-phosphate and phosphoenolpyruvate: step 4/7. Involved in the biosynthesis of the chorismate, which leads to the biosynthesis of aromatic amino acids. Catalyzes the reversible NADPH linked reduction of 3-dehydroshikimate (DHSA) to yield shikimate (SA). This Thermoplasma acidophilum (strain ATCC 25905 / DSM 1728 / JCM 9062 / NBRC 15155 / AMRC-C165) protein is Shikimate dehydrogenase (NADP(+)).